Reading from the N-terminus, the 523-residue chain is Frizzled-2 (523 aa).

The 120-residue stretch at 1-120 (PDHGFCQPIS…HGAEQICVGQ (120 aa)) folds into the FZ domain. Over 1–205 (PDHGFCQPIS…EDEIRFARVW (205 aa)) the chain is Extracellular. Cystine bridges form between C6/C67, C14/C60, C51/C88, C77/C117, and C81/C105. N-linked (GlcNAc...) asparagine glycosylation is present at N20. N-linked (GlcNAc...) asparagine glycosylation occurs at N121. Residues 206-226 (ILVWSVLCCASTFFTVTTYLV) form a helical membrane-spanning segment. The Cytoplasmic segment spans residues 227-237 (DMQRFRYPERP). Residues 238–258 (IIFLSGCYTMVSVAYIAGFVL) traverse the membrane as a helical segment. At 259 to 285 (EERVVCNERFQEDGYRTVVQGTKKEGC) the chain is on the extracellular side. Residues 286–306 (TILFMMLYFFSMASSIWWVIL) form a helical membrane-spanning segment. Over 307 to 328 (SLTWFLAAGMKWGHEAIEANSQ) the chain is Cytoplasmic. The chain crosses the membrane as a helical span at residues 329-349 (YFHLAAWAVPAVKTITILAMG). The Extracellular segment spans residues 350–372 (QIDGDLLSGVCFVGLNGIDPLRG). Residues 373–393 (FVLAPLFVYLFIGTSFLLAGF) traverse the membrane as a helical segment. The Cytoplasmic portion of the chain corresponds to 394–419 (VSLFRIRTIMKHGGTKTEKLERLMVR). The chain crosses the membrane as a helical span at residues 420–440 (IGVFSVLYTVPATIVIACYFY). Topologically, residues 441–477 (EQAFRQHWERSWISQHCKSLAIPCPLHFTPRMTPDFT) are extracellular. Residues 478–498 (VYMIKYLMTLIVGITSGFWIF) traverse the membrane as a helical segment. Residues 499-523 (SGKTLHSWRKFYTRLTNSRQGETTV) are Cytoplasmic-facing. The Lys-Thr-X-X-X-Trp motif, mediates interaction with the PDZ domain of Dvl family members motif lies at 501–506 (KTLHSW). The PDZ-binding motif lies at 521-523 (TTV).

The protein belongs to the G-protein coupled receptor Fz/Smo family. As to expression, expressed in the developing head and limbs. Expressed broadly in cranial ectoderm. Also expressed in the developing somites (dermomyotome) and in other cranial placodes, including the olfactory, lens, and otic placodes (rostral rim of the vesicle).

It localises to the membrane. The protein resides in the cell membrane. Functionally, receptor for Wnt proteins. Most of frizzled receptors are coupled to the beta-catenin canonical signaling pathway, which leads to the activation of disheveled proteins, inhibition of GSK-3 kinase, nuclear accumulation of beta-catenin and activation of Wnt target genes. A second signaling pathway involving PKC and calcium fluxes has been seen for some family members, but it is not yet clear if it represents a distinct pathway or if it can be integrated in the canonical pathway, as PKC seems to be required for Wnt-mediated inactivation of GSK-3 kinase. Both pathways seem to involve interactions with G-proteins. May be involved in transduction and intercellular transmission of polarity information during tissue morphogenesis and/or in differentiated tissues. This is Frizzled-2 (FZD2) from Gallus gallus (Chicken).